The primary structure comprises 358 residues: UDP-N-acetylglucosamine--N-acetylmuramyl-(pentapeptide) pyrophosphoryl-undecaprenol N-acetylglucosamine transferase (358 aa).

Residues 11–13, N124, R164, S195, and Q291 each bind UDP-N-acetyl-alpha-D-glucosamine; that span reads TGG.

This sequence belongs to the glycosyltransferase 28 family. MurG subfamily.

It localises to the cell inner membrane. It catalyses the reaction di-trans,octa-cis-undecaprenyl diphospho-N-acetyl-alpha-D-muramoyl-L-alanyl-D-glutamyl-meso-2,6-diaminopimeloyl-D-alanyl-D-alanine + UDP-N-acetyl-alpha-D-glucosamine = di-trans,octa-cis-undecaprenyl diphospho-[N-acetyl-alpha-D-glucosaminyl-(1-&gt;4)]-N-acetyl-alpha-D-muramoyl-L-alanyl-D-glutamyl-meso-2,6-diaminopimeloyl-D-alanyl-D-alanine + UDP + H(+). It participates in cell wall biogenesis; peptidoglycan biosynthesis. Functionally, cell wall formation. Catalyzes the transfer of a GlcNAc subunit on undecaprenyl-pyrophosphoryl-MurNAc-pentapeptide (lipid intermediate I) to form undecaprenyl-pyrophosphoryl-MurNAc-(pentapeptide)GlcNAc (lipid intermediate II). This is UDP-N-acetylglucosamine--N-acetylmuramyl-(pentapeptide) pyrophosphoryl-undecaprenol N-acetylglucosamine transferase from Leptospira borgpetersenii serovar Hardjo-bovis (strain JB197).